The chain runs to 291 residues: Syntaxin-1A homolog (291 aa).

Residues 1 to 24 form a disordered region; that stretch reads MTKDRLSALKAAQSEDEQDDDMHM. At 1–266 the chain is on the cytoplasmic side; that stretch reads MTKDRLSALK…QYQSKARRKK (266 aa). Residues 69–95 are a coiled coil; that stretch reads NDQKTKEELDELMAVIKRAANKVRGKL. The region spanning 193–255 is the t-SNARE coiled-coil homology domain; sequence LADIEARHND…DRAVADTKKA (63 aa). The helical; Anchor for type IV membrane protein transmembrane segment at 267–287 threads the bilayer; that stretch reads ICILVTGVILITGLIIFILFY. The Extracellular segment spans residues 288–291; sequence AKVL.

This sequence belongs to the syntaxin family. As to quaternary structure, interacts (via N-terminus, in open or in closed conformation) with unc-18; the interaction is direct. Interaction in open conformation with unc-18 promotes synaptic vesicle docking and tethering. Interaction via N-terminus with unc-18 mediates the secretion of the neurotransmitter acetylcholine from cholinergic motor neurons. Interaction with unc-18 is reduced in the presence of unc-13. In terms of tissue distribution, expressed throughout the head ganglion, nerve ring, ventral cord, dorsal cord, intestine, vulva and spermatheca.

It is found in the cell membrane. Its subcellular location is the cell projection. The protein resides in the axon. It localises to the dendrite. The protein localises to the perikaryon. Its function is as follows. Plays a critical role in several secretory processes, including cuticle secretion and neurotransmitter release, and probably assists in neuronal membrane maturation or the final stages of neuronal differentiation. Plays a role in synaptic vesicle docking and tethering through its association with unc-18. Through binding to unc-18 mediates the release of the neurotransmitter acetylcholine from cholinergic motor neurons, and thereby promotes locomotory behaviors. Essential for embryonic viability and development. Has a role in dauer formation and adult life span. Required for locomotion. Probably by regulating neuronal transmission downstream of lin-3 and receptor lin-23 and phospholipase plc-3 and upstream of innexin unc-7 and egl-4/PKG in ALA neurons, involved in the decrease in pharyngeal pumping during the quiescent state that precedes each larval molt. This is Syntaxin-1A homolog from Caenorhabditis elegans.